Here is a 396-residue protein sequence, read N- to C-terminus: Ribosomal RNA large subunit methyltransferase I (396 aa).

The PUA domain maps to 2–81; that stretch reads SVRLVLTKGR…ETIDIAFFTR (80 aa).

This sequence belongs to the methyltransferase superfamily. RlmI family.

It is found in the cytoplasm. It carries out the reaction cytidine(1962) in 23S rRNA + S-adenosyl-L-methionine = 5-methylcytidine(1962) in 23S rRNA + S-adenosyl-L-homocysteine + H(+). Its function is as follows. Specifically methylates the cytosine at position 1962 (m5C1962) of 23S rRNA. In Enterobacter sp. (strain 638), this protein is Ribosomal RNA large subunit methyltransferase I.